The chain runs to 276 residues: NH(3)-dependent NAD(+) synthetase (276 aa).

Residue 43–50 (GISGGVDS) participates in ATP binding. A Mg(2+)-binding site is contributed by Asp49. Arg146 lines the deamido-NAD(+) pocket. An ATP-binding site is contributed by Thr166. Glu171 lines the Mg(2+) pocket. Deamido-NAD(+)-binding residues include Lys179 and Asp186. ATP-binding residues include Lys195 and Thr217. Residue 266 to 267 (HK) participates in deamido-NAD(+) binding.

This sequence belongs to the NAD synthetase family. As to quaternary structure, homodimer.

It carries out the reaction deamido-NAD(+) + NH4(+) + ATP = AMP + diphosphate + NAD(+) + H(+). It functions in the pathway cofactor biosynthesis; NAD(+) biosynthesis; NAD(+) from deamido-NAD(+) (ammonia route): step 1/1. Catalyzes the ATP-dependent amidation of deamido-NAD to form NAD. Uses ammonia as a nitrogen source. The sequence is that of NH(3)-dependent NAD(+) synthetase from Vibrio atlanticus (strain LGP32) (Vibrio splendidus (strain Mel32)).